The chain runs to 514 residues: Polygalacturonase (514 aa).

Residues 1–22 (MGMKFMAAVAFLALQLIVMAAA) form the signal peptide. A propeptide spanning residues 23–50 (EDQSAQIMLDSDIEQYLRSNRSLKKLVH) is cleaved from the precursor. 6 PbH1 repeats span residues 214–240 (CEGVKIQGLKIKAPRDSPNTDGIDIFA), 241–262 (SKRFHIEKCVIGTGDDCIAIGT), 264–284 (SSNITIKDLICGPGHGISIGS), 294–315 (VSHVHVNRAKFIDTQNGLRIKT), 323–344 (ASYITYENVEMINSENPILINQ), and 357–384 (RSAVQIQGVTYKNIHGTSATAAAIQLMC). Residue Asp255 is the Proton donor of the active site. Asn266 carries an N-linked (GlcNAc...) asparagine glycan. The active site involves His278. Asn397 carries an N-linked (GlcNAc...) asparagine glycan.

The protein belongs to the glycosyl hydrolase 28 family.

It localises to the secreted. It is found in the cell wall. It carries out the reaction (1,4-alpha-D-galacturonosyl)n+m + H2O = (1,4-alpha-D-galacturonosyl)n + (1,4-alpha-D-galacturonosyl)m.. In Chamaecyparis obtusa (Hinoki false-cypress), this protein is Polygalacturonase.